Here is a 512-residue protein sequence, read N- to C-terminus: Maturase K (512 aa).

This sequence belongs to the intron maturase 2 family. MatK subfamily.

The protein localises to the plastid. It localises to the chloroplast. Its function is as follows. Usually encoded in the trnK tRNA gene intron. Probably assists in splicing its own and other chloroplast group II introns. The polypeptide is Maturase K (Piper cenocladum (Ant piper)).